The primary structure comprises 3088 residues: Protein prune homolog 2 (3088 aa).

Met-1 is subject to N-acetylmethionine. The DHH motif motif lies at 109–111 (GSS). Disordered regions lie at residues 433–468 (IRSSRSSKESSVFLSDDSPVGEGAGPHHTLLPGLDS), 490–628 (HFDL…EPAS), 673–759 (SSEQ…QGTN), 771–795 (SGRSPTAMPEPWGNPTDDGEPAAVA), 846–909 (SELL…PKTR), 952–1080 (SNLG…SSYD), 1192–1211 (SDEHTKDSAPSEHHTLNEKS), 1231–1371 (SFML…LVAS), 1413–1452 (RDVQTGMSADNLQPKDTHEKHLMSQRNSGETTETSDGMNF), 1472–1491 (LEPENVGGGPPHRVPRSLDF), 1515–1585 (VKGS…QESE), 1632–1698 (DSFS…EESI), 1741–1768 (LDSSEPAENENKSNPFCDNQQSSPDPWT), 1782–1813 (VEKEKRSSPETGTTGDVAWQISPKASFPKNED), 2089–2114 (ILTHCEHDSNSQASDSPDICHDSEAK), 2173–2215 (YQAD…PDMA), 2240–2260 (QEPTPEGDGSWISDSFSPESQ), 2492–2542 (SDLP…KNED), 2589–2667 (TQLA…SELG), 2687–2710 (ALEEASGPVSQSQKSKSRGRAGPD), 2814–2833 (QSEGSILSDDNLDSPDEIDI), and 2841–2875 (PDEADSFEYTGHDPTANKDSGQESESIPEYTAEEE). The span at 503-512 (SGQSQQSSHS) shows a compositional bias: low complexity. Over residues 562–582 (SLVEHDEEFVQRQDSPRDNSE) the composition is skewed to basic and acidic residues. Polar residues-rich tracts occupy residues 613–625 (MNSLVESSPSTEE) and 673–684 (SSEQESVFQSPE). The span at 685 to 699 (SWKEHKPSSIDRRAS) shows a compositional bias: basic and acidic residues. Residues 750-759 (LPNTSPQGTN) are compositionally biased toward polar residues. Residues 846-857 (SELLDNSPSEIN) are compositionally biased toward polar residues. The span at 865–876 (WGKKNNDSRDHI) shows a compositional bias: basic and acidic residues. Over residues 881 to 894 (NPSSDLDHTWTNSK) the composition is skewed to polar residues. Basic and acidic residues predominate over residues 895-909 (PPKEDQNGLVDPKTR). A compositionally biased stretch (low complexity) spans 964–977 (DTNYSTSDSYTSPT). Basic and acidic residues predominate over residues 980–1000 (GDEKETEHKPFAKEEGFESKD). Polar residues-rich tracts occupy residues 1001–1027 (GNSTAEETDIPPQSLQQSSRNRISSGP) and 1037–1048 (HTDNSSEINTTH). Basic and acidic residues-rich tracts occupy residues 1049–1062 (NLDENELKTEHTDG), 1192–1208 (SDEHTKDSAPSEHHTLN), 1282–1293 (HLDKQDTERETL), 1314–1339 (DPWKGHGDGQSESEKEAQGATDRGHL), and 1425–1434 (QPKDTHEKHL). Polar residues predominate over residues 1436-1450 (SQRNSGETTETSDGM). The span at 1537–1585 (SSEYTHSSASSPELNDSSVALSSWGQQPSSGYQEENQGNWSEQNHQESE) shows a compositional bias: polar residues. Positions 1687 to 1698 (SDDDSVGGEESI) are enriched in acidic residues. The span at 1752–1768 (KSNPFCDNQQSSPDPWT) shows a compositional bias: polar residues. 2 stretches are compositionally biased toward basic and acidic residues: residues 2516 to 2542 (EKTIPTKEPEQIKSEYKEERCTEKNED) and 2604 to 2622 (NERKGLSAEKMSSKSDTRS). Polar residues predominate over residues 2623–2632 (SFESPAQDQS). Over residues 2823-2833 (DNLDSPDEIDI) the composition is skewed to acidic residues. One can recognise a CRAL-TRIO domain in the interval 2895-3056 (DMKVIEPYRR…SIIKLDEELR (162 aa)).

This sequence belongs to the PPase class C family. Prune subfamily. A high level of expression seen in the nervous system (brain, cerebellum and spinal cord) as well as adrenal gland. Expressed at high levels in noneuroblastoma, rhabdomyosarcoma, melanoma and some osteosarcoma cell lines, whereas at only low levels in cancer cell lines of liver, breast, thyroid and colon. Expression is significantly higher in favorable tumors than aggressive ones.

Its subcellular location is the cytoplasm. May play an important role in regulating differentiation, survival and aggressiveness of the tumor cells. The sequence is that of Protein prune homolog 2 (PRUNE2) from Homo sapiens (Human).